The sequence spans 2183 residues: Coagulation factor V (2183 aa).

The N-terminal stretch at 1-19 is a signal peptide; the sequence is MLLVCPCFFLLVVLGTRWA. Plastocyanin-like domains follow at residues 30–192, 202–328, 347–524, and 534–682; these read QLRQ…LLIC, TQKM…IKNC, KRWE…LLIC, and VQRV…DVKC. F5/8 type A domains follow at residues 30 to 328 and 347 to 682; these read QLRQ…IKNC and KRWE…DVKC. Ca(2+) contacts are provided by Asp138 and Asp139. Residues Asn176, Asn238, and Asn381 are each glycosylated (N-linked (GlcNAc...) asparagine). The residue at position 638 (Thr638) is a Phosphothreonine. The interval 691–1533 is b; the sequence is SYEIYEPPAP…PDTIAAWYLR (843 aa). Sulfotyrosine occurs at positions 692 and 725. A propeptide spans 737-1533 (activation peptide (connecting region)); the sequence is SFKNSSLNPE…PDTIAAWYLR (797 aa). The N-linked (GlcNAc...) asparagine glycan is linked to Asn841. Disordered stretches follow at residues 884–904, 947–1045, and 1059–1144; these read PAGKTGRHSNPKNSYSGMKSE, DVDK…FPDR, and ETAL…YDLS. Residues 892–908 form a 1 X 17 AA tandem repeats region; that stretch reads SNPKNSYSGMKSEEDIP. The stretch at 892-911 is one 1-1 repeat; sequence SNPKNSYSGMKSEEDIPSEL. Ser903 carries the post-translational modification Phosphoserine. Residues 951-975 show a composition bias toward polar residues; it reads LTNSPQNQNITVPRGESTSHTNTTR. N-linked (GlcNAc...) asparagine glycans are attached at residues Asn959 and Asn972. Basic residues predominate over residues 1010-1021; it reads RTRKKKKNKKLA. 2 stretches are compositionally biased toward polar residues: residues 1059-1099 and 1120-1134; these read ETAL…SLDL and THSTTDPSYRSSPPE. A run of 32 repeats spans residues 1175-1183, 1184-1192, 1193-1201, 1202-1210, 1211-1219, 1220-1228, 1229-1237, 1238-1246, 1247-1255, 1256-1264, 1265-1273, 1274-1282, 1283-1291, 1292-1299, 1300-1308, 1309-1316, 1317-1325, 1326-1334, 1335-1341, 1342-1350, 1351-1359, 1360-1368, 1369-1377, 1378-1386, 1387-1395, 1396-1404, 1405-1413, 1414-1422, 1423-1431, 1432-1440, 1441-1449, and 1452-1461. The tract at residues 1175-1461 is 32 X 9 AA approximate tandem repeats of [TNP]-L-S-P-D-L-S-Q-T; sequence IPSSDLSLFT…PSPSPTLNNT (287 aa). A disordered region spans residues 1204–1312; the sequence is SPEDNQKTSS…PDLGQVPLFP (109 aa). Positions 1228-1251 are enriched in polar residues; the sequence is KTSSPDLGQVSLSPDDNQKTSSPD. Residues 1292–1304 show a composition bias toward polar residues; the sequence is PLSSDNQKTSSPD. Residues 1403 to 1462 are disordered; it reads QTNPALNHGHKASSADPDQASYPPDSGQASSLPELNRTLPHPDLTHIPPPSPSPTLNNTS. Asn1438 carries an N-linked (GlcNAc...) asparagine glycan. Plastocyanin-like domains lie at 1538-1711 and 1721-1866; these read HKKF…LLIC and NLPM…DKEC. An F5/8 type A 3 domain is found at 1538–1866; that stretch reads HKKFYYIAAE…TPFLIIDKEC (329 aa). Cu cation is bound by residues His1802 and His1804. An N-linked (GlcNAc...) asparagine glycan is attached at Asn1811. F5/8 type C domains are found at residues 1866–2020 and 2025–2180; these read CKMP…LQGC and CSTP…LFGC. Intrachain disulfides connect Cys1866–Cys2020 and Cys2025–Cys2180.

The protein belongs to the multicopper oxidase family. As to quaternary structure, factor Va, the activated form of factor V, is composed of a heavy chain and a light chain, non-covalently bound. The interaction between the two chains is calcium-dependent. Forms heterodimer with SERPINA5. Thrombin activates factor V proteolytically to the active cofactor, factor Va (formation of a heavy chain at the N-terminus and a light chain at the C-terminus). In terms of processing, sulfation is required for efficient thrombin cleavage and activation and for full procoagulant activity. Post-translationally, activated protein C inactivates factor V and factor Va by proteolytic degradation.

It is found in the secreted. With respect to regulation, inhibited by SERPINA5. Central regulator of hemostasis. It serves as a critical cofactor for the prothrombinase activity of factor Xa that results in the activation of prothrombin to thrombin. This Mus musculus (Mouse) protein is Coagulation factor V (F5).